The sequence spans 535 residues: MAKKVAVIGAGVSGLISLKCCVDEGLEPTCFERTEDIGGVWRFKENVEDGRASIYQSVVTNTSKEMSCFSDFPMPEDFPNFLHNSKLLEYFRIFAKKFDLLKYIQFQTTVLSVRKCPDFSSSGQWKVVTQSNGKEQSAVFDAVMVCSGHHILPHIPLKSFPGMERFKGQYFHSRQYKHPDGFEGKRILVIGMGNSGSDIAVELSKNAAQVFISTRHGTWVMSRISEDGYPWDSVFHTRFRSMLRNVLPRTAVKWMIEQQMNRWFNHENYGLEPQNKYIMKEPVLNDDVPSRLLCGAIKVKSTVKELTETSAIFEDGTVEENIDVIIFATGYSFSFPFLEDSLVKVENNMVSLYKYIFPAHLDKSTLACIGLIQPLGSIFPTAELQARWVTRVFKGLCSLPSERTMMMDIIKRNEKRIDLFGESQSQTLQTNYVDYLDELALEIGAKPDFCSLLFKDPKLAVRLYFGPCNSYQYRLVGPGQWEGARNAIFTQKQRILKPLKTRALKDSSNFSVSFLLKILGLLAVVVAFFCQLQWS.

At alanine 2 the chain carries N-acetylalanine. Residues glycine 9–serine 13, glutamate 32, valine 40–tryptophan 41, and asparagine 61–threonine 62 each bind FAD. NADP(+) is bound by residues threonine 60–asparagine 61 and serine 195–aspartate 198. A Glycyl lysine isopeptide (Lys-Gly) (interchain with G-Cter in SUMO) cross-link involves residue lysine 492. Residues phenylalanine 510–cysteine 530 form a helical membrane-spanning segment.

This sequence belongs to the FMO family. Requires FAD as cofactor. The cofactor is Mg(2+). As to expression, expressed in lung (at protein level). Expressed predominantly in lung, and at a much lesser extent in kidney. Also expressed in fetal lung, but not in liver, kidney and brain.

The protein resides in the microsome membrane. It localises to the endoplasmic reticulum membrane. Functionally, catalyzes the oxidative metabolism of numerous xenobiotics, including mainly therapeutic drugs and insecticides that contain a soft nucleophile, most commonly nitrogen and sulfur and participates to their bioactivation. Specifically catalyzes S-oxygenation of sulfur derived compounds such as thioureas-derived compounds, thioetherorganophosphates to their sulfenic acid. In vitro, catalyzes S-oxygenation of the second-line antitubercular drugs thiacetazone (TAZ) and ethionamide (ETA), forming a sulfinic acid and a carbodiimide via a postulated sulfenic acid intermediate. Also catalyzes S-oxygenation of the thioether-containing organophosphate insecticides, phorate and disulfoton. The polypeptide is Flavin-containing monooxygenase 2 (Homo sapiens (Human)).